A 260-amino-acid chain; its full sequence is Transcription factor SUM-1 (260 aa).

A bHLH domain is found at 112 to 163 (DKRKAATLRERRRLRKVNEAFEALKRHTCANPNQRLPKVEILRNAIEYIEKL). The disordered stretch occupies residues 171 to 208 (KANGDSEMDSAETSSNTSDAMTDGSSPGSYSSDKAQQY). Over residues 181–205 (AETSSNTSDAMTDGSSPGSYSSDKA) the composition is skewed to polar residues.

As to quaternary structure, efficient DNA binding requires dimerization with another bHLH protein. Homodimer, and heterodimer with the ubiquitous bHLH protein E12.

Its subcellular location is the nucleus. Its function is as follows. Regulatory factor during embryogenesis. Conversion of pluripotent secondary mesenchyme cells to myogenic cells. It binds to the MCK enhancer element. The chain is Transcription factor SUM-1 (SUM-1) from Lytechinus variegatus (Green sea urchin).